The primary structure comprises 479 residues: UDP-N-acetylmuramate--L-alanine ligase (479 aa).

128 to 134 contributes to the ATP binding site; it reads GAHGKTT.

Belongs to the MurCDEF family.

Its subcellular location is the cytoplasm. The enzyme catalyses UDP-N-acetyl-alpha-D-muramate + L-alanine + ATP = UDP-N-acetyl-alpha-D-muramoyl-L-alanine + ADP + phosphate + H(+). It participates in cell wall biogenesis; peptidoglycan biosynthesis. Cell wall formation. This is UDP-N-acetylmuramate--L-alanine ligase from Psychrobacter arcticus (strain DSM 17307 / VKM B-2377 / 273-4).